A 359-amino-acid polypeptide reads, in one-letter code: Peptide chain release factor 1 (359 aa).

Gln235 is modified (N5-methylglutamine).

Belongs to the prokaryotic/mitochondrial release factor family. Methylated by PrmC. Methylation increases the termination efficiency of RF1.

The protein resides in the cytoplasm. Peptide chain release factor 1 directs the termination of translation in response to the peptide chain termination codons UAG and UAA. The sequence is that of Peptide chain release factor 1 from Polynucleobacter asymbioticus (strain DSM 18221 / CIP 109841 / QLW-P1DMWA-1) (Polynucleobacter necessarius subsp. asymbioticus).